The primary structure comprises 420 residues: MYRVWNFITGYSLLLIGGAIIALIWANIDINSYHHFTEVVIWADAPIGHLHDDGHGHVVRDLTLHYLVNDLLMALFFAIAAKEVWEAVILKNGSLRGKKAATPLVATLGGMVGPISIYLGIAYFLGSTTFDAVANGWAIPTATDIAFSYLVGRLVFGAGHPAVRFLLLLAIADDAAGLLILAIFYPSGELAPAWLLLSFGAALGVYVLANWLPRRLDRGDQLRRRSSWMRQKLSFWPYALAGCASWYGFMQSGLHPALGLLPIVLTIPHADRAFGIFSAAEVHLHDLLNTMEHALKYPVEIILGLFGLMNAGVAFSAMGEATWLVLAGLLIGKPVGIFLFGWLAAKPLGLGLPQGMRMIDLVVIGCVAAIGFTVSLFVASVAFEPGPVQDAAKMGALFSFGAAAVSIIVGKLTQVQKQEI.

11 helical membrane passes run 4-24 (VWNF…IALI), 70-90 (DLLM…AVIL), 104-124 (LVAT…IAYF), 132-152 (AVAN…YLVG), 165-185 (FLLL…AIFY), 192-212 (PAWL…ANWL), 233-250 (LSFW…YGFM), 299-319 (VEII…SAMG), 323-343 (WLVL…FGWL), 361-381 (LVVI…VASV), and 395-415 (GALF…LTQV).

Belongs to the NhaA Na(+)/H(+) (TC 2.A.33) antiporter family.

The protein localises to the cell inner membrane. It catalyses the reaction Na(+)(in) + 2 H(+)(out) = Na(+)(out) + 2 H(+)(in). In terms of biological role, na(+)/H(+) antiporter that extrudes sodium in exchange for external protons. The protein is Na(+)/H(+) antiporter NhaA of Jannaschia sp. (strain CCS1).